Reading from the N-terminus, the 74-residue chain is Translation initiation factor IF-1, chloroplastic (74 aa).

Positions 1–72 (MEKQNIIEME…TKGRITYRLR (72 aa)) constitute an S1-like domain.

It belongs to the IF-1 family. Component of the 30S ribosomal translation pre-initiation complex which assembles on the 30S ribosome in the order IF-2 and IF-3, IF-1 and N-formylmethionyl-tRNA(fMet); mRNA recruitment can occur at any time during PIC assembly.

It is found in the plastid. Its subcellular location is the chloroplast. In terms of biological role, one of the essential components for the initiation of protein synthesis. Stabilizes the binding of IF-2 and IF-3 on the 30S subunit to which N-formylmethionyl-tRNA(fMet) subsequently binds. Helps modulate mRNA selection, yielding the 30S pre-initiation complex (PIC). Upon addition of the 50S ribosomal subunit IF-1, IF-2 and IF-3 are released leaving the mature 70S translation initiation complex. This chain is Translation initiation factor IF-1, chloroplastic, found in Chlorokybus atmophyticus (Soil alga).